A 343-amino-acid chain; its full sequence is Biotin synthase (343 aa).

Residues 36-254 (NTIQISTLLS…IAVARIMMPK (219 aa)) form the Radical SAM core domain. C51, C55, and C58 together coordinate [4Fe-4S] cluster. 4 residues coordinate [2Fe-2S] cluster: C95, C126, C186, and R258.

Belongs to the radical SAM superfamily. Biotin synthase family. In terms of assembly, homodimer. Requires [4Fe-4S] cluster as cofactor. The cofactor is [2Fe-2S] cluster.

The catalysed reaction is (4R,5S)-dethiobiotin + (sulfur carrier)-SH + 2 reduced [2Fe-2S]-[ferredoxin] + 2 S-adenosyl-L-methionine = (sulfur carrier)-H + biotin + 2 5'-deoxyadenosine + 2 L-methionine + 2 oxidized [2Fe-2S]-[ferredoxin]. It functions in the pathway cofactor biosynthesis; biotin biosynthesis; biotin from 7,8-diaminononanoate: step 2/2. Catalyzes the conversion of dethiobiotin (DTB) to biotin by the insertion of a sulfur atom into dethiobiotin via a radical-based mechanism. This Buchnera aphidicola subsp. Acyrthosiphon pisum (strain 5A) protein is Biotin synthase.